Here is a 438-residue protein sequence, read N- to C-terminus: 23S rRNA (uracil(1939)-C(5))-methyltransferase RlmD (438 aa).

The TRAM domain maps to 10–69; sequence KASVNTKHQSVDVVRLDHNGAGIAFVDKKPVFIEGALPGEKAIIQFIEQKKQFSRAKLIK. Cys82, Cys88, Cys91, and Cys169 together coordinate [4Fe-4S] cluster. S-adenosyl-L-methionine is bound by residues Gln272, Phe301, Asn306, Glu322, Asn349, and Asp370. The Nucleophile role is filled by Cys396.

The protein belongs to the class I-like SAM-binding methyltransferase superfamily. RNA M5U methyltransferase family. RlmD subfamily.

It carries out the reaction uridine(1939) in 23S rRNA + S-adenosyl-L-methionine = 5-methyluridine(1939) in 23S rRNA + S-adenosyl-L-homocysteine + H(+). Catalyzes the formation of 5-methyl-uridine at position 1939 (m5U1939) in 23S rRNA. This Aliivibrio fischeri (strain ATCC 700601 / ES114) (Vibrio fischeri) protein is 23S rRNA (uracil(1939)-C(5))-methyltransferase RlmD.